A 336-amino-acid polypeptide reads, in one-letter code: SCP domain-containing protein 1 (336 aa).

Positions 1 to 18 (MEFKLLLVLCFNIGLICS) are cleaved as a signal peptide. An N-linked (GlcNAc...) asparagine glycan is attached at N47. The segment covering 73–85 (QGGNTAPSSSLPG) has biased composition (polar residues). Residues 73–94 (QGGNTAPSSSLPGVSSMPMPSA) are disordered. Residues 175–292 (LEEHNKFRSD…YCGDMSFIAC (118 aa)) enclose the SCP domain. N213 and N257 each carry an N-linked (GlcNAc...) asparagine glycan.

As to expression, component of the acid-insoluble and acid-soluble organic matrix of calcified layers of the shell (at protein level).

It localises to the secreted. In Lottia gigantea (Giant owl limpet), this protein is SCP domain-containing protein 1.